Reading from the N-terminus, the 1004-residue chain is MEEEGSGRGGDGPAAHGRIGDTASLGASCVRAGVGGDSPVMVSSASVRKTVKMSETCDFIPYVDDDDDGNSEEENSASSGILPCDGMQHDTPDYIRRGAAAARHRIAPLELFSGPSPPQGPPSPSPAIGGAALEATSNDGVAEPQVHPPEGISSIISTGGGEQETATMGSQSVHETLHIEENEGKCSCCGQLKQEYSLLLREKEECRRVLEDLMRENELKSRECHEAQASLHELRMELMRKSMHVGSLAFAVEGQVKEKSRWCQLLNDLSEKFKALKAEHQILLQESLECKKFVADATQMTTTIQQHVNQYASLECEFKDLKEKFTEETKERKDLYNKLIEVKGNIRVFCRCRPLNGEEIEEGASMAVDFESAKDGELIVRGHVSSKKVFKFDSVFSPEEDQEKVFEKTVPFATSVLDGYNVCIFAYGQTGTGKTFTMEGIEDARGVNYRTLEELFRITKERQGLFQYEITVSVLEVYNEQIHDLLLTGTQPGATAKRLEVRQVAEGVHHVPGLVEARVTNMNEAWEVLQTGSKARVVGSTNANEHSSRSHCMHCVMVKGENLMNGEQTKSKLWLIDLAGSERVAKTDAQGERLKEAQNINKSLSALGDVISALATKSQHIPFRNSKLTHLLQDSLSGDSKTLMFVQISPNENDVGETLCSLNFASRVRGIELGQARKQVDVGELSRYKLMAGRAKQDSKNKDAQIKSMEETIQSLEAKNKAKDLLTMNLQEKIKELEAQLLVERKIARQHVDNKIAQDHLHQQQQSKKPENSPCPTRSPMAERNLNSTAEKPVTLLKDLGIARQMFSDSNTDTYSINHLMSMSSEKENNPAGGAQPTKARRVSLCGGAHQQPAAPPRRGSLIPLPRRNSLMLPLPLPKPATPAAAASPLDMITEQCSSPLVIAPNDIRGGGGGGGRNKRIINSILRRSLQKKVIIRPPLMAAHQSGRRAGAGVAGTTTHGGGGGGVMRARRVPVSGGRGGGGVQHNREKERGWNNGTSLRQLN.

3 disordered regions span residues 1-21 (MEEEGSGRGGDGPAAHGRIGD), 61-90 (PYVDDDDDGNSEEENSASSGILPCDGMQHD), and 110-169 (ELFS…ATMG). Residues 63–75 (VDDDDDGNSEEEN) show a composition bias toward acidic residues. The span at 115 to 125 (PSPPQGPPSPS) shows a compositional bias: pro residues. Coiled-coil stretches lie at residues 189–230 (CGQL…AQAS) and 266–338 (LNDL…LYNK). The 327-residue stretch at 345 to 671 (NIRVFCRCRP…LNFASRVRGI (327 aa)) folds into the Kinesin motor domain. 428–435 (GQTGTGKT) contacts ATP. The stretch at 691 to 742 (MAGRAKQDSKNKDAQIKSMEETIQSLEAKNKAKDLLTMNLQEKIKELEAQLL) forms a coiled coil. Disordered stretches follow at residues 759 to 791 (DHLHQQQQSKKPENSPCPTRSPMAERNLNSTAE) and 946 to 1004 (SGRR…RQLN). Low complexity predominate over residues 948 to 958 (RRAGAGVAGTT). The span at 995–1004 (NNGTSLRQLN) shows a compositional bias: polar residues.

This sequence belongs to the TRAFAC class myosin-kinesin ATPase superfamily. Kinesin family. KIN-14 subfamily.

This chain is Kinesin-like protein KIN-14R, found in Oryza sativa subsp. japonica (Rice).